The chain runs to 183 residues: Probable chemoreceptor glutamine deamidase CheD (183 aa).

The protein belongs to the CheD family.

It catalyses the reaction L-glutaminyl-[protein] + H2O = L-glutamyl-[protein] + NH4(+). Functionally, probably deamidates glutamine residues to glutamate on methyl-accepting chemotaxis receptors (MCPs), playing an important role in chemotaxis. The polypeptide is Probable chemoreceptor glutamine deamidase CheD (Zymomonas mobilis subsp. mobilis (strain ATCC 31821 / ZM4 / CP4)).